A 206-amino-acid polypeptide reads, in one-letter code: D-ribitol-5-phosphate phosphatase (206 aa).

Residue D8 is the Nucleophile of the active site. D8 and D172 together coordinate Mg(2+).

It belongs to the HAD-like hydrolase superfamily. Requires Mg(2+) as cofactor.

It carries out the reaction D-ribitol 1-phosphate + H2O = ribitol + phosphate. The enzyme catalyses D-ribitol 5-phosphate + H2O = ribitol + phosphate. The catalysed reaction is 5-amino-6-(5-phospho-D-ribitylamino)uracil + H2O = 5-amino-6-(D-ribitylamino)uracil + phosphate. It participates in cofactor biosynthesis; riboflavin biosynthesis; 5-amino-6-(D-ribitylamino)uracil from GTP: step 4/4. Functionally, catalyzes the dephosphorylation of D-ribitol-5-phosphate and D-ribitol-1-phosphate. Is also able to dephosphorylate 5-amino-6-(5-phospho-D-ribitylamino)uracil, and thus could be involved in the riboflavin biosynthesis pathway. The protein is D-ribitol-5-phosphate phosphatase of Bacteroides thetaiotaomicron (strain ATCC 29148 / DSM 2079 / JCM 5827 / CCUG 10774 / NCTC 10582 / VPI-5482 / E50).